The primary structure comprises 471 residues: Tigger transposable element-derived protein 3 (471 aa).

In terms of domain architecture, HTH psq-type spans 3–55 (LSSKKKLHALSLAEKIQVLELLDESKMSQSEVARRFQVSQPQISRICKNKEKL). DNA-binding regions (H-T-H motif) lie at residues 31-51 (QSEV…ICKN) and 100-130 (PMLL…WKRR). Positions 67–137 (ERKRKRESKY…KRRNNVGFGA (71 aa)) constitute an HTH CENPB-type domain. Residues 167-360 (FSPEDVFGCA…VPPQLIFSSF (194 aa)) enclose the DDE-1 domain.

Belongs to the tigger transposable element derived protein family.

The protein resides in the nucleus. The sequence is that of Tigger transposable element-derived protein 3 (TIGD3) from Homo sapiens (Human).